A 250-amino-acid polypeptide reads, in one-letter code: Pyridoxine 5'-phosphate synthase (250 aa).

Residue asparagine 11 coordinates 3-amino-2-oxopropyl phosphate. Residue 13–14 (DH) coordinates 1-deoxy-D-xylulose 5-phosphate. Residue arginine 22 participates in 3-amino-2-oxopropyl phosphate binding. The active-site Proton acceptor is the histidine 47. 2 residues coordinate 1-deoxy-D-xylulose 5-phosphate: arginine 49 and histidine 54. Glutamate 74 acts as the Proton acceptor in catalysis. Threonine 104 provides a ligand contact to 1-deoxy-D-xylulose 5-phosphate. Histidine 198 acts as the Proton donor in catalysis. Residues glycine 199 and 220–221 (GY) each bind 3-amino-2-oxopropyl phosphate.

It belongs to the PNP synthase family. Homooctamer; tetramer of dimers.

It localises to the cytoplasm. It catalyses the reaction 3-amino-2-oxopropyl phosphate + 1-deoxy-D-xylulose 5-phosphate = pyridoxine 5'-phosphate + phosphate + 2 H2O + H(+). It participates in cofactor biosynthesis; pyridoxine 5'-phosphate biosynthesis; pyridoxine 5'-phosphate from D-erythrose 4-phosphate: step 5/5. Catalyzes the complicated ring closure reaction between the two acyclic compounds 1-deoxy-D-xylulose-5-phosphate (DXP) and 3-amino-2-oxopropyl phosphate (1-amino-acetone-3-phosphate or AAP) to form pyridoxine 5'-phosphate (PNP) and inorganic phosphate. The protein is Pyridoxine 5'-phosphate synthase of Bradyrhizobium diazoefficiens (strain JCM 10833 / BCRC 13528 / IAM 13628 / NBRC 14792 / USDA 110).